The sequence spans 694 residues: Elongation factor G (694 aa).

Residues 8 to 287 (EDYRNFGIMA…AVVEFLPAPT (280 aa)) enclose the tr-type G domain. GTP-binding positions include 17-24 (AHIDAGKT), 86-90 (DTPGH), and 140-143 (NKMD).

Belongs to the TRAFAC class translation factor GTPase superfamily. Classic translation factor GTPase family. EF-G/EF-2 subfamily.

The protein resides in the cytoplasm. Catalyzes the GTP-dependent ribosomal translocation step during translation elongation. During this step, the ribosome changes from the pre-translocational (PRE) to the post-translocational (POST) state as the newly formed A-site-bound peptidyl-tRNA and P-site-bound deacylated tRNA move to the P and E sites, respectively. Catalyzes the coordinated movement of the two tRNA molecules, the mRNA and conformational changes in the ribosome. The chain is Elongation factor G from Brucella canis (strain ATCC 23365 / NCTC 10854 / RM-666).